The following is a 955-amino-acid chain: uncharacterized protein (955 aa).

The N-terminal stretch at 1-24 is a signal peptide; it reads MQSSLIKILGVLAIVATLVCFVFA. Residues 127-146 form a disordered region; that stretch reads STRPGKSNLDDNGKMIPIPR. 6 consecutive transmembrane segments (helical) span residues 597–617, 707–727, 739–759, 781–801, 818–838, and 857–877; these read IKALLILYVMVYGAMFLLGFA, LGLSGIIYFIITVIAVMIVII, AFMATCILIGIAPIFISFLLF, VVLMAGIIVLTQLFTIYLDFV, FIGTILPVALLNVPIFCINWF, and IVALVIIAYGMYGYVEFSGNM. The interval 905 to 955 is disordered; it reads LSQVGMDEKTRKGITGRAKERLKQRNETLKQAEKTRKNAPKEEPPKAEIPK. A compositionally biased stretch (basic and acidic residues) spans 910–955; sequence MDEKTRKGITGRAKERLKQRNETLKQAEKTRKNAPKEEPPKAEIPK.

The protein belongs to the TrbL/VirB6 family.

It is found in the cell membrane. This is an uncharacterized protein from Rickettsia bellii (strain RML369-C).